A 438-amino-acid polypeptide reads, in one-letter code: Glutamyl-tRNA(Gln) amidotransferase subunit D (438 aa).

Positions 92 to 422 (PTITILGTGG…REAKKMMLTN (331 aa)) constitute an Asparaginase/glutaminase domain. Active-site residues include Thr102, Thr178, Asp179, and Lys256.

This sequence belongs to the asparaginase 1 family. GatD subfamily. Heterodimer of GatD and GatE.

It carries out the reaction L-glutamyl-tRNA(Gln) + L-glutamine + ATP + H2O = L-glutaminyl-tRNA(Gln) + L-glutamate + ADP + phosphate + H(+). Its function is as follows. Allows the formation of correctly charged Gln-tRNA(Gln) through the transamidation of misacylated Glu-tRNA(Gln) in organisms which lack glutaminyl-tRNA synthetase. The reaction takes place in the presence of glutamine and ATP through an activated gamma-phospho-Glu-tRNA(Gln). The GatDE system is specific for glutamate and does not act on aspartate. In Pyrococcus furiosus (strain ATCC 43587 / DSM 3638 / JCM 8422 / Vc1), this protein is Glutamyl-tRNA(Gln) amidotransferase subunit D.